Here is a 102-residue protein sequence, read N- to C-terminus: Acylphosphatase 1 (102 aa).

The 89-residue stretch at 12–100 (TRLVRVRGRV…PRFDRFEQLP (89 aa)) folds into the Acylphosphatase-like domain. Catalysis depends on residues Arg27 and Asn45.

It belongs to the acylphosphatase family.

The enzyme catalyses an acyl phosphate + H2O = a carboxylate + phosphate + H(+). This Ralstonia nicotianae (strain ATCC BAA-1114 / GMI1000) (Ralstonia solanacearum) protein is Acylphosphatase 1 (acyP1).